A 220-amino-acid chain; its full sequence is Endonuclease NucS (220 aa).

The protein belongs to the NucS endonuclease family.

The protein resides in the cytoplasm. Its function is as follows. Cleaves both 3' and 5' ssDNA extremities of branched DNA structures. The polypeptide is Endonuclease NucS (Frankia alni (strain DSM 45986 / CECT 9034 / ACN14a)).